Reading from the N-terminus, the 587-residue chain is Cryptochrome-1 (587 aa).

A Photolyase/cryptochrome alpha/beta domain is found at Val-3 to Leu-132. Lys-11 participates in a covalent cross-link: Glycyl lysine isopeptide (Lys-Gly) (interchain with G-Cter in ubiquitin). Positions Asn-50–Phe-54 match the LIR 1 motif. Residue Ser-71 is modified to Phosphoserine; by AMPK. The LIR 2 motif lies at Asp-82 to Leu-87. Lys-107 is covalently cross-linked (Glycyl lysine isopeptide (Lys-Gly) (interchain with G-Cter in ubiquitin)). The LIR 3 signature appears at Lys-151–Leu-156. Lys-159 participates in a covalent cross-link: Glycyl lysine isopeptide (Lys-Gly) (interchain with G-Cter in ubiquitin). Ser-247 is modified (phosphoserine; by MAPK). FAD is bound at residue Ser-252. 2 short sequence motifs (LIR) span residues Leu-255–Leu-260 and Asp-271–Val-276. Position 280 is a phosphoserine; by AMPK (Ser-280). An LIR 6 motif is present at residues Ser-285–Leu-290. Position 289 (Gln-289) interacts with FAD. A Glycyl lysine isopeptide (Lys-Gly) (interchain with G-Cter in ubiquitin) cross-link involves residue Lys-329. An LIR 7 motif is present at residues Thr-335–Trp-339. His-355 is an FAD binding site. The segment at Trp-371–Met-470 is required for inhibition of CLOCK-BMAL1-mediated transcription. The short motif at Lys-379 to Leu-384 is the LIR 8 element. Asp-387–Asp-389 contributes to the FAD binding site. Short sequence motifs (LIR) lie at residues Gly-395–Leu-400, His-411–Val-416, and Arg-430–Val-435. The interaction with TIMELESS stretch occupies residues Val-471–Arg-493. Lys-485 participates in a covalent cross-link: Glycyl lysine isopeptide (Lys-Gly) (interchain with G-Cter in ubiquitin). 2 consecutive short sequence motifs (LIR) follow at residues Gln-486–Leu-491 and Ser-492–Leu-497. A disordered region spans residues Gly-554–Asn-587. Ser-569 carries the post-translational modification Phosphoserine.

The protein belongs to the DNA photolyase class-1 family. In terms of assembly, component of the circadian core oscillator, which includes the CRY proteins, CLOCK or NPAS2, BMAL1 or BMAL2, CSNK1D and/or CSNK1E, TIMELESS, and the PER proteins. Interacts directly with TIMELESS. Interacts directly with PER1, PER2 and PER3; interaction with PER2 inhibits its ubiquitination and vice versa. Interacts with FBXL21. Interacts with FBXL3. Interacts with CLOCK-BMAL1 independently of PER2 and DNA. Interacts with HDAC1, HDAC2 and SIN3B. Interacts with nuclear receptors AR, NR1D1, NR3C1/GR, RORA and RORC; the interaction with at least NR3C1/GR is ligand dependent. Interacts with PRKDC. Interacts with the G protein subunit alpha GNAS; the interaction may block GPCR-mediated regulation of cAMP concentrations. Interacts with PRMT5. Interacts with EZH2. Interacts with MYBBP1A, DOCK7, HNRNPU, RPL7A, RPL8 and RPS3. Interacts with PPP5C (via TPR repeats). Interacts with MAP1LC3B. Interacts with CLOCK. Interacts with BMAL1. Interacts weakly with HDAC3; this interaction is enhanced in the presence of FBXL3. Interacts with TRIM28, KCTD5 and DDB1 Interacts with HNF4A. Interacts with PSMD2 in a KDM8-dependent manner. Interacts with KDM8 in a FBXL3-dependent manner. Interacts with PPARG in a ligand-dependent manner. Interacts with PPARD (via domain NR LBD) and NR1I2 (via domain NR LBD) in a ligand-dependent manner. Interacts with PPARA, NR1I3 and VDR. The cofactor is FAD. (6R)-5,10-methylene-5,6,7,8-tetrahydrofolate serves as cofactor. Phosphorylation on Ser-247 by MAPK is important for the inhibition of CLOCK-BMAL1-mediated transcriptional activity. Phosphorylation by CSNK1E requires interaction with PER1 or PER2. Phosphorylation at Ser-71 and Ser-280 by AMPK decreases protein stability. Phosphorylation at Ser-569 exhibits a robust circadian rhythm with a peak at CT8, increases protein stability, prevents SCF(FBXL3)-mediated degradation and is antagonized by interaction with PRKDC. Post-translationally, ubiquitinated by the SCF(FBXL3) and SCF(FBXL21) complexes, regulating the balance between degradation and stabilization. The SCF(FBXL3) complex is mainly nuclear and mediates ubiquitination and subsequent degradation of CRY1. In contrast, cytoplasmic SCF(FBXL21) complex-mediated ubiquitination leads to stabilize CRY1 and counteract the activity of the SCF(FBXL3) complex. The SCF(FBXL3) and SCF(FBXL21) complexes probably mediate ubiquitination at different Lys residues. Ubiquitination at Lys-11 and Lys-107 are specifically ubiquitinated by the SCF(FBXL21) complex but not by the SCF(FBXL3) complex. Ubiquitination may be inhibited by PER2. Deubiquitinated by USP7. In terms of processing, undergoes autophagy-mediated degradation in the liver in a time-dependent manner. Autophagic degradation of CRY1 (an inhibitor of gluconeogenesis) occurs during periods of reduced feeding allowing induction of gluconeogenesis and maintenance of blood glucose levels. In terms of tissue distribution, expressed in all tissues tested including spleen, liver, skeletal muscle, kidney, brain, intestine, eye, harderian gland, liver and heart. Highest levels in the eye, brain, kidney and harderian gland. In the brain, especially located to the suprachiasma nucleus (SCN).

The protein resides in the cytoplasm. It is found in the nucleus. Its function is as follows. Transcriptional repressor which forms a core component of the circadian clock. The circadian clock, an internal time-keeping system, regulates various physiological processes through the generation of approximately 24 hour circadian rhythms in gene expression, which are translated into rhythms in metabolism and behavior. It is derived from the Latin roots 'circa' (about) and 'diem' (day) and acts as an important regulator of a wide array of physiological functions including metabolism, sleep, body temperature, blood pressure, endocrine, immune, cardiovascular, and renal function. Consists of two major components: the central clock, residing in the suprachiasmatic nucleus (SCN) of the brain, and the peripheral clocks that are present in nearly every tissue and organ system. Both the central and peripheral clocks can be reset by environmental cues, also known as Zeitgebers (German for 'timegivers'). The predominant Zeitgeber for the central clock is light, which is sensed by retina and signals directly to the SCN. The central clock entrains the peripheral clocks through neuronal and hormonal signals, body temperature and feeding-related cues, aligning all clocks with the external light/dark cycle. Circadian rhythms allow an organism to achieve temporal homeostasis with its environment at the molecular level by regulating gene expression to create a peak of protein expression once every 24 hours to control when a particular physiological process is most active with respect to the solar day. Transcription and translation of core clock components (CLOCK, NPAS2, BMAL1, BMAL2, PER1, PER2, PER3, CRY1 and CRY2) plays a critical role in rhythm generation, whereas delays imposed by post-translational modifications (PTMs) are important for determining the period (tau) of the rhythms (tau refers to the period of a rhythm and is the length, in time, of one complete cycle). A diurnal rhythm is synchronized with the day/night cycle, while the ultradian and infradian rhythms have a period shorter and longer than 24 hours, respectively. Disruptions in the circadian rhythms contribute to the pathology of cardiovascular diseases, cancer, metabolic syndromes and aging. A transcription/translation feedback loop (TTFL) forms the core of the molecular circadian clock mechanism. Transcription factors, CLOCK or NPAS2 and BMAL1 or BMAL2, form the positive limb of the feedback loop, act in the form of a heterodimer and activate the transcription of core clock genes and clock-controlled genes (involved in key metabolic processes), harboring E-box elements (5'-CACGTG-3') within their promoters. The core clock genes: PER1/2/3 and CRY1/2 which are transcriptional repressors form the negative limb of the feedback loop and interact with the CLOCK|NPAS2-BMAL1|BMAL2 heterodimer inhibiting its activity and thereby negatively regulating their own expression. This heterodimer also activates nuclear receptors NR1D1/2 and RORA/B/G, which form a second feedback loop and which activate and repress BMAL1 transcription, respectively. CRY1 and CRY2 have redundant functions but also differential and selective contributions at least in defining the pace of the SCN circadian clock and its circadian transcriptional outputs. More potent transcriptional repressor in cerebellum and liver than CRY2, though more effective in lengthening the period of the SCN oscillator. On its side, CRY2 seems to play a critical role in tuning SCN circadian period by opposing the action of CRY1. With CRY2, is dispensable for circadian rhythm generation but necessary for the development of intercellular networks for rhythm synchrony. Capable of translocating circadian clock core proteins such as PER proteins to the nucleus. Interacts with CLOCK-BMAL1 independently of PER proteins and is found at CLOCK-BMAL1-bound sites, suggesting that CRY may act as a molecular gatekeeper to maintain CLOCK-BMAL1 in a poised and repressed state until the proper time for transcriptional activation. Represses the CLOCK-BMAL1 induced transcription of BHLHE40/DEC1, ATF4, MTA1, KLF10 and NAMPT. May repress circadian target genes expression in collaboration with HDAC1 and HDAC2 through histone deacetylation. Mediates the clock-control activation of ATR and modulates ATR-mediated DNA damage checkpoint. In liver, mediates circadian regulation of cAMP signaling and gluconeogenesis by binding to membrane-coupled G proteins and blocking glucagon-mediated increases in intracellular cAMP concentrations and CREB1 phosphorylation. Inhibits hepatic gluconeogenesis by decreasing nuclear FOXO1 levels that down-regulates gluconeogenic gene expression. Besides its role in the maintenance of the circadian clock, is also involved in the regulation of other processes. Represses glucocorticoid receptor NR3C1/GR-induced transcriptional activity by binding to glucocorticoid response elements (GREs). Plays a key role in glucose and lipid metabolism modulation, in part, through the transcriptional regulation of genes involved in these pathways, such as LEP or ACSL4. Represses PPARD and its target genes in the skeletal muscle and limits exercise capacity. Plays an essential role in the generation of circadian rhythms in the retina. Represses the transcriptional activity of NR1I2. The sequence is that of Cryptochrome-1 (CRY1) from Spalax judaei (Judean Mountains blind mole rat).